The chain runs to 145 residues: MQALLAPVVEALGYECWGIEFLSQGRHSLLRVYIDHADGILIDDCEKVSRQISGVLDVEDPISSEYTLEVSSPGMDRPLFTLEQFVRCAGEQVKIRLRSPFEGRRNFQGLLRGVEDQDVVVLVDDHEYLLPIDLIDKANIIPRFD.

Belongs to the RimP family.

Its subcellular location is the cytoplasm. In terms of biological role, required for maturation of 30S ribosomal subunits. In Azotobacter vinelandii (strain DJ / ATCC BAA-1303), this protein is Ribosome maturation factor RimP.